A 347-amino-acid polypeptide reads, in one-letter code: Haptoglobin (347 aa).

Positions 1–18 are cleaved as a signal peptide; that stretch reads MSDLGAVVALLLWGQLFA. Positions 31-88 constitute a Sushi domain; sequence DGCPKPPMIANGYVEHLVRYQCKNYYRLRTEGDGVYTLNNEKQWTNKAVGDKLPECEA. Disulfide bonds link cysteine 52–cysteine 86 and cysteine 90–cysteine 207. The interval 103 to 347 is serine protease; it reads ILGGHLDAKG…DWVQKTIAEN (245 aa). 5 N-linked (GlcNAc...) asparagine glycosylation sites follow: asparagine 125, asparagine 148, asparagine 152, asparagine 182, and asparagine 232. 2 cysteine pairs are disulfide-bonded: cysteine 250–cysteine 281 and cysteine 292–cysteine 322. The tract at residues 259–264 is interaction with CD163; the sequence is VPEKKT.

The protein belongs to the peptidase S1 family. Tetramer of two alpha and two beta chains; disulfide-linked. The hemoglobin/haptoglobin complex is composed of a haptoglobin dimer bound to two hemoglobin alpha-beta dimers. Interacts with CD163. Interacts with ERGIC3. As to expression, expressed by the liver and secreted in plasma.

Its subcellular location is the secreted. Functionally, as a result of hemolysis, hemoglobin is found to accumulate in the kidney and is secreted in the urine. Haptoglobin captures, and combines with free plasma hemoglobin to allow hepatic recycling of heme iron and to prevent kidney damage. Haptoglobin also acts as an antioxidant, has antibacterial activity and plays a role in modulating many aspects of the acute phase response. Hemoglobin/haptoglobin complexes are rapidly cleared by the macrophage CD163 scavenger receptor expressed on the surface of liver Kupfer cells through an endocytic lysosomal degradation pathway. The protein is Haptoglobin (HP) of Papio hamadryas (Hamadryas baboon).